Consider the following 524-residue polypeptide: Cytochrome P450 4F3 (524 aa).

Residues 19 to 39 (WLLLLLAGASCLLAYILTPIY) form a helical membrane-spanning segment. Cys468 provides a ligand contact to heme.

Belongs to the cytochrome P450 family. Heme serves as cofactor. As to expression, highest level in polymorphonuclear leukocytes and dendritic cells. Detectable in lymph nodes, spleen, bone marrow and peripheral blood. Highly expressed in ovary. Very low level in liver, kidney, and smooth muscle. Expressed in neutrophils (at protein level).

It localises to the endoplasmic reticulum membrane. The protein resides in the microsome membrane. The enzyme catalyses leukotriene B4 + reduced [NADPH--hemoprotein reductase] + O2 = 18-hydroxy-leukotriene B4 + oxidized [NADPH--hemoprotein reductase] + H2O + H(+). It carries out the reaction leukotriene B4 + reduced [NADPH--hemoprotein reductase] + O2 = 19-hydroxy-leukotriene B4 + oxidized [NADPH--hemoprotein reductase] + H2O + H(+). It participates in lipid metabolism; leukotriene B4 degradation. Functionally, a cytochrome P450 monooxygenase involved in the metabolism of the pro-inflammatory lipid mediator leukotriene B4 (LTB4). Hydroxylates at the omega-1 and omega-2 positions LTB4. This oxidation step leads to LTB4 inactivation, which is postulated to be a crucial part of the resolution of inflammation. Mechanistically, uses molecular oxygen inserting one oxygen atom into a substrate, and reducing the second into a water molecule, with two electrons provided by NADPH via cytochrome P450 reductase (CPR; NADPH-ferrihemoprotein reductase). The polypeptide is Cytochrome P450 4F3 (Mus musculus (Mouse)).